We begin with the raw amino-acid sequence, 70 residues long: UPF0270 protein VS_2853 (70 aa).

This sequence belongs to the UPF0270 family.

In Vibrio atlanticus (strain LGP32) (Vibrio splendidus (strain Mel32)), this protein is UPF0270 protein VS_2853.